The chain runs to 623 residues: Zinc finger protein 143 (623 aa).

C2H2-type zinc fingers lie at residues 230–254 (FRCE…ERSH), 260–284 (YICD…VRTH), 290–314 (YRCQ…TRTH), 320–344 (FKCP…IRTH), 350–374 (YYCA…MRIH), 380–404 (YVCT…HVVH), and 410–433 (YNCN…RTAH).

It belongs to the GLI C2H2-type zinc-finger protein family.

Its subcellular location is the nucleus. Functionally, transcriptional activator. Activates the gene for selenocysteine tRNA (tRNAsec). Binds to the activator element (AE) motif of the selenocysteine tRNA gene promoter. This Danio rerio (Zebrafish) protein is Zinc finger protein 143 (znf143).